Consider the following 463-residue polypeptide: Glutamate--tRNA ligase 2 (463 aa).

Positions 10–20 (PSPTGFLHIGS) match the 'HIGH' region motif. Positions 239 to 243 (KLSKR) match the 'KMSKS' region motif. An ATP-binding site is contributed by Lys-242.

This sequence belongs to the class-I aminoacyl-tRNA synthetase family. Glutamate--tRNA ligase type 1 subfamily. Monomer.

The protein resides in the cytoplasm. It carries out the reaction tRNA(Glu) + L-glutamate + ATP = L-glutamyl-tRNA(Glu) + AMP + diphosphate. Catalyzes the attachment of glutamate to tRNA(Glu) in a two-step reaction: glutamate is first activated by ATP to form Glu-AMP and then transferred to the acceptor end of tRNA(Glu). The protein is Glutamate--tRNA ligase 2 of Rickettsia akari (strain Hartford).